Consider the following 626-residue polypeptide: E3 ubiquitin-protein ligase HRD1 (626 aa).

A signal peptide spans 1 to 15; it reads MQLLLSSVCMALTSA. Topologically, residues 16 to 38 are lumenal; the sequence is VIGFAYYQKQQFYPAVVYITKSN. A helical membrane pass occupies residues 39 to 59; the sequence is ASMGVIYIQFFVIVFMFGKLL. The Cytoplasmic segment spans residues 60–96; sequence SKIFLGTLRAAEFEHLLERFWYALTETCLAFTVFRDD. A helical transmembrane segment spans residues 97–117; that stretch reads FNPRFVALFTVLLFLKSFHWL. Topologically, residues 118-128 are lumenal; sequence AEERVDFMERS. The chain crosses the membrane as a helical span at residues 129 to 149; the sequence is PVLGWLFHIRVGSLLTVLGIL. At 150-167 the chain is on the cytoplasmic side; the sequence is DYVLLIHAYNSTLVRGPT. A helical membrane pass occupies residues 168–188; it reads VQLVFGFEYAILLTVIASTAI. The Lumenal segment spans residues 189 to 222; sequence KYVLHAAEMRTDTPWENKAVFLLYTELVIGLIKV. The helical transmembrane segment at 223-243 threads the bilayer; the sequence is VLYILFVVIMAKIYALPMFVF. The interval 234-268 is interaction with p53/TP53; the sequence is KIYALPMFVFRPMFFTIRNFRKALNDVIMSRRAIR. Residues 244–626 are Cytoplasmic-facing; it reads RPMFFTIRNF…AATNERTTAE (383 aa). Residues 289–328 form an RING-type; atypical zinc finger; that stretch reads CIICREDMVNHSKKLPCGHIFHTTCLRSWFQRQQTCPTCR. The tract at residues 569 to 600 is disordered; sequence DADEDDIPSTATEAVSIPNSDADFEENSSELG. The span at 577-587 shows a compositional bias: polar residues; the sequence is STATEAVSIPN.

Belongs to the HRD1 family. Homodimer. Interacts with p53. May interact with Septin2.

It localises to the endoplasmic reticulum membrane. It carries out the reaction S-ubiquitinyl-[E2 ubiquitin-conjugating enzyme]-L-cysteine + [acceptor protein]-L-lysine = [E2 ubiquitin-conjugating enzyme]-L-cysteine + N(6)-ubiquitinyl-[acceptor protein]-L-lysine.. Its pathway is protein modification; protein ubiquitination. Its function is as follows. Acts as an E3 ubiquitin-protein ligase which accepts ubiquitin specifically from endoplasmic reticulum-associated UBC7 E2 ligase and transfers it to substrates, promoting their degradation. Component of the endoplasmic reticulum quality control (ERQC) system also called ER-associated degradation (ERAD) involved in ubiquitin-dependent degradation of misfolded endoplasmic reticulum proteins. Also promotes the degradation of normal but naturally short-lived proteins. Protects cells from ER stress-induced apoptosis. Sequesters p53 in the cytoplasm and promotes its degradation, thereby negatively regulating its biological function in transcription, cell cycle regulation and apoptosis. The polypeptide is E3 ubiquitin-protein ligase HRD1 (sip3) (Drosophila melanogaster (Fruit fly)).